The primary structure comprises 921 residues: DNA ligase (921 aa).

Residues 90–94, 139–140, and glutamate 173 each bind NAD(+); these read DAAYD and SL. Catalysis depends on lysine 175, which acts as the N6-AMP-lysine intermediate. The NAD(+) site is built by arginine 196, glutamate 235, lysine 360, and lysine 384. 4 residues coordinate Zn(2+): cysteine 481, cysteine 484, cysteine 500, and cysteine 506. The interval 663 to 688 is disordered; it reads EAAIESAETQGGAASETTGAPTGAEA. The region spanning 839–921 is the BRCT domain; it reads SLPQTLAGKT…AQLLETGSID (83 aa).

This sequence belongs to the NAD-dependent DNA ligase family. LigA subfamily. Mg(2+) is required as a cofactor. Requires Mn(2+) as cofactor.

It catalyses the reaction NAD(+) + (deoxyribonucleotide)n-3'-hydroxyl + 5'-phospho-(deoxyribonucleotide)m = (deoxyribonucleotide)n+m + AMP + beta-nicotinamide D-nucleotide.. Functionally, DNA ligase that catalyzes the formation of phosphodiester linkages between 5'-phosphoryl and 3'-hydroxyl groups in double-stranded DNA using NAD as a coenzyme and as the energy source for the reaction. It is essential for DNA replication and repair of damaged DNA. This is DNA ligase from Bifidobacterium longum subsp. infantis (strain ATCC 15697 / DSM 20088 / JCM 1222 / NCTC 11817 / S12).